Here is a 1229-residue protein sequence, read N- to C-terminus: Nuclear envelope pore membrane protein POM 121C (1229 aa).

A compositionally biased stretch (low complexity) spans 1 to 10 (MSPAAAAAGA). A disordered region spans residues 1–24 (MSPAAAAAGAGERRRPIASVRDGR). A cisternal side region spans residues 1–40 (MSPAAAAAGAGERRRPIASVRDGRGRGCGGPAGAALLGLS). The segment at 1 to 398 (MSPAAAAAGA…AITSSYSSTR (398 aa)) is required for targeting to the nucleus and nuclear pore complex. Over residues 11–24 (GERRRPIASVRDGR) the composition is skewed to basic and acidic residues. Residues 41 to 61 (LVGLLLYLVPAAAALAWLAVG) traverse the membrane as a helical segment. The pore side stretch occupies residues 62–1229 (TTAAWWGLSR…QARRQHTRKK (1168 aa)). Phosphoserine is present on Ser-81. Disordered stretches follow at residues 90-200 (RTLF…LPDR), 296-507 (KKKK…LGYS), 579-747 (KKMQ…TAPT), 936-966 (PLPS…ALTP), and 1202-1229 (PSFS…TRKK). Residues 155–166 (ARPAPRSTPPSQ) show a composition bias toward pro residues. A compositionally biased stretch (low complexity) spans 176–189 (PSLPTPLLRPSGRP). 5 positions are modified to phosphoserine: Ser-322, Ser-328, Ser-348, Ser-370, and Ser-373. Residues 374–400 (LTGAYTSGIPSSSRNAITSSYSSTRGI) show a composition bias toward polar residues. The span at 409–422 (PSSSPFSSPASSRS) shows a compositional bias: low complexity. 2 stretches are compositionally biased toward basic and acidic residues: residues 427–439 (RPAK…ELCH) and 449–463 (ADKE…DTTP). A compositionally biased stretch (polar residues) spans 468-479 (NSNSQSTPGSSG). The span at 612–629 (PPLGLSQSGPPGLLPSPS) shows a compositional bias: low complexity. The span at 660–673 (QAETATKPQATSAP) shows a compositional bias: polar residues. Low complexity-rich tracts occupy residues 689–703 (SPSS…SASP) and 726–747 (SVSA…TAPT). Over residues 1219-1229 (LQARRQHTRKK) the composition is skewed to basic residues.

This sequence belongs to the POM121 family.

It is found in the nucleus. Its subcellular location is the nuclear pore complex. It localises to the nucleus membrane. The protein localises to the endoplasmic reticulum membrane. In terms of biological role, essential component of the nuclear pore complex (NPC). The repeat-containing domain may be involved in anchoring components of the pore complex to the pore membrane. When overexpressed in cells induces the formation of cytoplasmic annulate lamellae (AL). The chain is Nuclear envelope pore membrane protein POM 121C (POM121C) from Homo sapiens (Human).